The primary structure comprises 370 residues: Phosphoserine aminotransferase (370 aa).

Met-1 is modified (N-acetylmethionine). O-phospho-L-serine-binding residues include His-44 and Arg-45. At Lys-51 the chain carries N6-acetyllysine. Gly-79 and Trp-107 together coordinate pyridoxal 5'-phosphate. The residue at position 127 (Lys-127) is an N6-acetyllysine. Residues Thr-156, Asp-176, and Gln-199 each coordinate pyridoxal 5'-phosphate. At Lys-200 the chain carries N6-(pyridoxal phosphate)lysine. Residues Asn-241 and Thr-242 each contribute to the pyridoxal 5'-phosphate site. An N6-acetyllysine mark is found at Lys-269, Lys-318, and Lys-323. Ser-331 is modified (phosphoserine). Lys-333 is subject to N6-acetyllysine. O-phospho-L-serine is bound by residues His-335, Arg-336, and Arg-342.

This sequence belongs to the class-V pyridoxal-phosphate-dependent aminotransferase family. SerC subfamily. Homodimer. The cofactor is pyridoxal 5'-phosphate.

The catalysed reaction is O-phospho-L-serine + 2-oxoglutarate = 3-phosphooxypyruvate + L-glutamate. It participates in amino-acid biosynthesis; L-serine biosynthesis; L-serine from 3-phospho-D-glycerate: step 2/3. Its function is as follows. Involved in L-serine biosynthesis via the phosphorylated pathway, a three-step pathway converting the glycolytic intermediate 3-phospho-D-glycerate into L-serine. Catalyzes the second step, that is the pyridoxal 5'-phosphate-dependent transamination of 3-phosphohydroxypyruvate and L-glutamate to O-phosphoserine (OPS) and alpha-ketoglutarate. This Mus musculus (Mouse) protein is Phosphoserine aminotransferase.